Here is a 1098-residue protein sequence, read N- to C-terminus: Paired amphipathic helix protein Sin3b (1098 aa).

Gly residues predominate over residues Met-1 to Gly-25. A disordered region spans residues Met-1 to Gly-26. The segment at Met-1–Phe-299 is interaction with CRY1. PAH domains are found at residues Leu-30 to Gly-100 and Val-145 to Ala-230. The interaction with REST stretch occupies residues Pro-52–Pro-98. Over residues Asn-238–Gln-247 the composition is skewed to polar residues. The interval Asn-238–Lys-274 is disordered. The tract at residues Lys-275 to Gln-499 is interaction with NCOR1. Positions Lys-283–Lys-360 constitute a PAH 3 domain. The interaction with SUDS3 and HDAC1 stretch occupies residues Ala-383–Ile-550. The segment at Gln-661–Pro-702 is disordered. Ser-667 and Ser-670 each carry phosphoserine. Positions Glu-673–Pro-694 are enriched in basic and acidic residues.

Component of the SIN3B complex, which includes SIN3B, HDAC2 or HDAC1, PHF12 and MORF4L1. Interacts with FOXK1/MNF, MXI, MAD, NCOR1 and SAP30. Interaction with SUDS3 enhances the interaction with HDAC1 to form a complex. Interacts with CRY1, HCFC1, MAD3, MAD4, MAEL, REST, RNF220 and SETDB1. Interacts with C6orf89. Interacts with MYT1L. Post-translationally, ubiquitinated by RNF220 that leads to proteasomal degradation.

It localises to the nucleus. Functionally, acts as a transcriptional repressor. Interacts with MXI1 to repress MYC responsive genes and antagonize MYC oncogenic activities. Interacts with MAD-MAX heterodimers by binding to MAD. The heterodimer then represses transcription by tethering SIN3B to DNA. Also forms a complex with FOXK1 which represses transcription. With FOXK1, regulates cell cycle progression probably by repressing cell cycle inhibitor genes expression. As part of the SIN3B complex represses transcription and counteracts the histone acetyltransferase activity of EP300 through the recognition H3K27ac marks by PHF12 and the activity of the histone deacetylase HDAC2. SIN3B complex is recruited downstream of the constitutively active genes transcriptional start sites through interaction with histones and mitigates histone acetylation and RNA polymerase II progression within transcribed regions contributing to the regulation of transcription. This chain is Paired amphipathic helix protein Sin3b (Sin3b), found in Mus musculus (Mouse).